We begin with the raw amino-acid sequence, 679 residues long: DNA ligase (679 aa).

NAD(+) is bound by residues 43-47 (DYVYD), 92-93 (SM), and glutamate 124. The N6-AMP-lysine intermediate role is filled by lysine 126. NAD(+)-binding residues include arginine 147, glutamate 181, lysine 297, and lysine 321. 4 residues coordinate Zn(2+): cysteine 415, cysteine 418, cysteine 433, and cysteine 438. In terms of domain architecture, BRCT spans 599–679 (TESAEWAGKR…RFDQAMKEEN (81 aa)).

It belongs to the NAD-dependent DNA ligase family. LigA subfamily. The cofactor is Mg(2+). Requires Mn(2+) as cofactor.

It carries out the reaction NAD(+) + (deoxyribonucleotide)n-3'-hydroxyl + 5'-phospho-(deoxyribonucleotide)m = (deoxyribonucleotide)n+m + AMP + beta-nicotinamide D-nucleotide.. Functionally, DNA ligase that catalyzes the formation of phosphodiester linkages between 5'-phosphoryl and 3'-hydroxyl groups in double-stranded DNA using NAD as a coenzyme and as the energy source for the reaction. It is essential for DNA replication and repair of damaged DNA. The polypeptide is DNA ligase (Limosilactobacillus fermentum (strain NBRC 3956 / LMG 18251) (Lactobacillus fermentum)).